Consider the following 456-residue polypeptide: Na(+)-translocating NADH-quinone reductase subunit A (456 aa).

It belongs to the NqrA family. As to quaternary structure, composed of six subunits; NqrA, NqrB, NqrC, NqrD, NqrE and NqrF.

The enzyme catalyses a ubiquinone + n Na(+)(in) + NADH + H(+) = a ubiquinol + n Na(+)(out) + NAD(+). In terms of biological role, NQR complex catalyzes the reduction of ubiquinone-1 to ubiquinol by two successive reactions, coupled with the transport of Na(+) ions from the cytoplasm to the periplasm. NqrA to NqrE are probably involved in the second step, the conversion of ubisemiquinone to ubiquinol. The protein is Na(+)-translocating NADH-quinone reductase subunit A of Rhodopirellula baltica (strain DSM 10527 / NCIMB 13988 / SH1).